A 266-amino-acid polypeptide reads, in one-letter code: 22 kDa alpha-zein 8 (266 aa).

Positions 1 to 21 are cleaved as a signal peptide; that stretch reads MATKILALLALLALFVSATNA.

The protein belongs to the zein family.

Functionally, zeins are major seed storage proteins. This chain is 22 kDa alpha-zein 8, found in Zea mays (Maize).